Consider the following 315-residue polypeptide: MAQPRIGQRVIVDVPATTANLGPGFDCLGAALDLNNRFAMRRIEGGGERFELIIEGSEGSHLRGGPENLVYRAAQRVWKAAGLEPVALEARVRLAVPPARGLGSSATAIVAGLMGANALVGEPLSKEKLLELAIDIEGHPDNVVPSLLGGLCMTAKAASQRWRVVRCEWTSTVKAVVAIPSIRLSTSEARRAMPKAIPVSDAVVNLGALTLLLQGLRTGNGDLISDGMHDRLHEPYRWRLIKGGDQVKQAAMDAGAWGCAISGAGPSVLALCAEDKGMAVSRAMVRAWEAAGVASRAPVLNVQTTGSHWQPADDE.

Residue 97 to 107 (PPARGLGSSAT) participates in ATP binding.

Belongs to the GHMP kinase family. Homoserine kinase subfamily.

It is found in the cytoplasm. It catalyses the reaction L-homoserine + ATP = O-phospho-L-homoserine + ADP + H(+). It functions in the pathway amino-acid biosynthesis; L-threonine biosynthesis; L-threonine from L-aspartate: step 4/5. Catalyzes the ATP-dependent phosphorylation of L-homoserine to L-homoserine phosphate. This Synechococcus sp. (strain CC9902) protein is Homoserine kinase.